We begin with the raw amino-acid sequence, 505 residues long: MSQRVYIFDTTLRDGEQSPGVSLNVGEKVQIARQLAKLGVDIIEAGFPITSPGDFKAVSEIARQVKGVTVAALARANFQDIDRAWEAVRHAEQPRIHTFIATSDIHLKYKLRMSREEVLDAAVAAVKRARAYTGDVEFSAEDASRSDLDFLCRVLAAAIEAGATVINIPDTVGYAVPEEWGKFINTIYHKVPGIEKVIVSVHCHNDLGMAVANSLAAVMNGARQVEGAINGIGERAGNAAIEEMVMALYTRKDQYNLYTNIKTEEIYRTSKLVSALTGMKVQPNKAVVGKNAFAHEAGIHQDGVLKERTTYEIMNPAMVGISKSNLVLGKHSGRHAFRHRLEEMGYNLSDEELNSAFERFKKLADKKMEITDEDLEAIIEEEMRLVPHTYTLEYLHISSGTTVVPTATVGLKRDGQLMEEAACGNGPVDAICKAIDKITGLNCTMTSWGINAVTAGKDALGDVSLKVTADGEKVYVGRGISTDVLEASAKAYVNAVNKLIWDSQK.

Residues 5–267 enclose the Pyruvate carboxyltransferase domain; that stretch reads VYIFDTTLRD…YTNIKTEEIY (263 aa). Asp-14, His-202, His-204, and Asn-238 together coordinate Mn(2+). The interval 391–505 is regulatory domain; sequence TLEYLHISSG…VNKLIWDSQK (115 aa).

Belongs to the alpha-IPM synthase/homocitrate synthase family. LeuA type 1 subfamily. In terms of assembly, homodimer. It depends on Mn(2+) as a cofactor.

The protein resides in the cytoplasm. It catalyses the reaction 3-methyl-2-oxobutanoate + acetyl-CoA + H2O = (2S)-2-isopropylmalate + CoA + H(+). It functions in the pathway amino-acid biosynthesis; L-leucine biosynthesis; L-leucine from 3-methyl-2-oxobutanoate: step 1/4. Its function is as follows. Catalyzes the condensation of the acetyl group of acetyl-CoA with 3-methyl-2-oxobutanoate (2-ketoisovalerate) to form 3-carboxy-3-hydroxy-4-methylpentanoate (2-isopropylmalate). This Pelotomaculum thermopropionicum (strain DSM 13744 / JCM 10971 / SI) protein is 2-isopropylmalate synthase.